Here is a 369-residue protein sequence, read N- to C-terminus: Phosphatidylglycerol--prolipoprotein diacylglyceryl transferase (369 aa).

Transmembrane regions (helical) follow at residues 26 to 46 (YYGI…ILTL), 60 to 80 (YVFI…FIIG), and 97 to 117 (LAIQ…FFFI). Arg167 lines the a 1,2-diacyl-sn-glycero-3-phospho-(1'-sn-glycerol) pocket. A run of 2 helical transmembrane segments spans residues 216–236 (VPIF…IVFL) and 273–293 (FVTS…GFIF).

This sequence belongs to the Lgt family.

It is found in the cell membrane. It carries out the reaction L-cysteinyl-[prolipoprotein] + a 1,2-diacyl-sn-glycero-3-phospho-(1'-sn-glycerol) = an S-1,2-diacyl-sn-glyceryl-L-cysteinyl-[prolipoprotein] + sn-glycerol 1-phosphate + H(+). Its pathway is protein modification; lipoprotein biosynthesis (diacylglyceryl transfer). In terms of biological role, catalyzes the transfer of the diacylglyceryl group from phosphatidylglycerol to the sulfhydryl group of the N-terminal cysteine of a prolipoprotein, the first step in the formation of mature lipoproteins. The polypeptide is Phosphatidylglycerol--prolipoprotein diacylglyceryl transferase (Mycoplasmoides gallisepticum (strain R(low / passage 15 / clone 2)) (Mycoplasma gallisepticum)).